The primary structure comprises 318 residues: Ribose-phosphate pyrophosphokinase (318 aa).

ATP is bound by residues 43-45 and 102-103; these read DGE and RQ. 2 residues coordinate Mg(2+): histidine 136 and aspartate 176. The active site involves lysine 199. D-ribose 5-phosphate contacts are provided by residues arginine 201, aspartate 225, and 229–233; that span reads DTAGT.

Belongs to the ribose-phosphate pyrophosphokinase family. Class I subfamily. Homohexamer. Mg(2+) serves as cofactor.

Its subcellular location is the cytoplasm. The enzyme catalyses D-ribose 5-phosphate + ATP = 5-phospho-alpha-D-ribose 1-diphosphate + AMP + H(+). It functions in the pathway metabolic intermediate biosynthesis; 5-phospho-alpha-D-ribose 1-diphosphate biosynthesis; 5-phospho-alpha-D-ribose 1-diphosphate from D-ribose 5-phosphate (route I): step 1/1. Its function is as follows. Involved in the biosynthesis of the central metabolite phospho-alpha-D-ribosyl-1-pyrophosphate (PRPP) via the transfer of pyrophosphoryl group from ATP to 1-hydroxyl of ribose-5-phosphate (Rib-5-P). In Listeria ivanovii, this protein is Ribose-phosphate pyrophosphokinase.